The sequence spans 501 residues: Cytochrome P450 71B25 (501 aa).

Residues 1-21 form a helical membrane-spanning segment; sequence MAILQSFLLLLSLPFLFTLIY. Residue Cys445 coordinates heme.

Belongs to the cytochrome P450 family. Heme serves as cofactor.

The protein resides in the membrane. The protein is Cytochrome P450 71B25 (CYP71B25) of Arabidopsis thaliana (Mouse-ear cress).